The chain runs to 278 residues: 3-methyl-2-oxobutanoate hydroxymethyltransferase (278 aa).

2 residues coordinate Mg(2+): Asp49 and Asp88. Residues 49–50 (DS), Asp88, and Lys118 each bind 3-methyl-2-oxobutanoate. Residue Glu120 participates in Mg(2+) binding. Glu186 acts as the Proton acceptor in catalysis.

The protein belongs to the PanB family. Homodecamer; pentamer of dimers. Mg(2+) is required as a cofactor.

It localises to the cytoplasm. The enzyme catalyses 3-methyl-2-oxobutanoate + (6R)-5,10-methylene-5,6,7,8-tetrahydrofolate + H2O = 2-dehydropantoate + (6S)-5,6,7,8-tetrahydrofolate. It functions in the pathway cofactor biosynthesis; (R)-pantothenate biosynthesis; (R)-pantoate from 3-methyl-2-oxobutanoate: step 1/2. Catalyzes the reversible reaction in which hydroxymethyl group from 5,10-methylenetetrahydrofolate is transferred onto alpha-ketoisovalerate to form ketopantoate. This is 3-methyl-2-oxobutanoate hydroxymethyltransferase from Bordetella parapertussis (strain 12822 / ATCC BAA-587 / NCTC 13253).